The chain runs to 586 residues: Phosphatase and actin regulator 1 (586 aa).

The short motif at R62 to K83 is the Nuclear localization signal element. The RPEL 1 repeat unit spans residues A92 to Y117. The tract at residues E373–S414 is disordered. Acidic residues predominate over residues D397–S413. RPEL repeat units lie at residues D428–T453, T466–N491, and R504–S529.

Belongs to the phosphatase and actin regulator family. Interacts (via RPEL repeats) with ACTA1.

Its subcellular location is the cytoplasm. It is found in the synapse. It localises to the nucleus. Its function is as follows. Binds actin monomers (G actin) and plays a role in the reorganization of the actin cytoskeleton and in formation of actin stress fibers. The polypeptide is Phosphatase and actin regulator 1 (phactr1) (Xenopus laevis (African clawed frog)).